The sequence spans 796 residues: Nuclear GTPase SLIP-GC (796 aa).

Position 107–114 (107–114 (GITGAGKS)) interacts with GTP. Coiled coils occupy residues 158 to 185 (SDQE…EEAD) and 742 to 776 (GLCK…LRRS).

The protein resides in the nucleus speckle. Functionally, nuclear GTPase found in germinal center B-cells, where it may inhibit function of the activation-induced cytidine deaminase AICDA. Reduces somatic hypermutation in B-cells which may enhance genome stability. The protein is Nuclear GTPase SLIP-GC of Mus musculus (Mouse).